Here is a 348-residue protein sequence, read N- to C-terminus: Zinc finger protein 843 (348 aa).

The C2H2-type 1 zinc finger occupies 33–55 (CKCKACGRGFTQSASLLQHWRVH). A C2H2-type 2; degenerate zinc finger spans residues 145–167 (FCCCSCGDSVNEKTSLSQRVLPH). Over residues 184–195 (APSSVAPDSTSG) the composition is skewed to polar residues. 2 disordered regions span residues 184–203 (APSS…GSPG) and 256–329 (ATQP…WRGA).

This chain is Zinc finger protein 843 (ZNF843), found in Homo sapiens (Human).